The chain runs to 126 residues: Probable DNA-directed RNA polymerase II subunit RPB11 (126 aa).

Belongs to the archaeal Rpo11/eukaryotic RPB11/RPC19 RNA polymerase subunit family. Component of the RNA polymerase II (Pol II) complex consisting of 12 subunits.

The protein localises to the nucleus. Functionally, DNA-dependent RNA polymerase catalyzes the transcription of DNA into RNA using the four ribonucleoside triphosphates as substrates. Component of RNA polymerase II which synthesizes mRNA precursors and many functional non-coding RNAs. Pol II is the central component of the basal RNA polymerase II transcription machinery. It is composed of mobile elements that move relative to each other. RPB11 is part of the core element with the central large cleft. The polypeptide is Probable DNA-directed RNA polymerase II subunit RPB11 (Plasmodium falciparum (isolate 3D7)).